The sequence spans 320 residues: tRNA U34 carboxymethyltransferase (320 aa).

Carboxy-S-adenosyl-L-methionine contacts are provided by residues Lys89, Trp103, Lys108, Gly128, 150 to 152 (DPT), 179 to 180 (IE), Met194, Tyr198, and Arg313.

Belongs to the class I-like SAM-binding methyltransferase superfamily. CmoB family. In terms of assembly, homotetramer.

The catalysed reaction is carboxy-S-adenosyl-L-methionine + 5-hydroxyuridine(34) in tRNA = 5-carboxymethoxyuridine(34) in tRNA + S-adenosyl-L-homocysteine + H(+). Catalyzes carboxymethyl transfer from carboxy-S-adenosyl-L-methionine (Cx-SAM) to 5-hydroxyuridine (ho5U) to form 5-carboxymethoxyuridine (cmo5U) at position 34 in tRNAs. In Actinobacillus pleuropneumoniae serotype 3 (strain JL03), this protein is tRNA U34 carboxymethyltransferase.